Consider the following 256-residue polypeptide: Type III pantothenate kinase (256 aa).

Residue 7–14 (DIGNTNVV) coordinates ATP. 108–111 (GADC) serves as a coordination point for substrate. Residue Asp110 is the Proton acceptor of the active site. Residue Asp130 participates in K(+) binding. Thr133 contacts ATP. Residue Thr185 coordinates substrate.

The protein belongs to the type III pantothenate kinase family. Homodimer. NH4(+) is required as a cofactor. Requires K(+) as cofactor.

The protein resides in the cytoplasm. It catalyses the reaction (R)-pantothenate + ATP = (R)-4'-phosphopantothenate + ADP + H(+). The protein operates within cofactor biosynthesis; coenzyme A biosynthesis; CoA from (R)-pantothenate: step 1/5. Functionally, catalyzes the phosphorylation of pantothenate (Pan), the first step in CoA biosynthesis. This chain is Type III pantothenate kinase, found in Bifidobacterium adolescentis (strain ATCC 15703 / DSM 20083 / NCTC 11814 / E194a).